Here is a 287-residue protein sequence, read N- to C-terminus: Putative DNA-3-methyladenine glycosylase YfjP (287 aa).

The Proton acceptor role is filled by Asp242.

This sequence belongs to the alkylbase DNA glycosidase AlkA family.

It carries out the reaction Hydrolysis of alkylated DNA, releasing 3-methyladenine, 3-methylguanine, 7-methylguanine and 7-methyladenine.. Its function is as follows. Hydrolysis of the deoxyribose N-glycosidic bond to excise 3-methyladenine, 3-methylguanine, 7-methylguanine, O2-methylthymine, and O2-methylcytosine from the damaged DNA polymer formed by alkylation lesions. This is Putative DNA-3-methyladenine glycosylase YfjP (yfjP) from Bacillus subtilis (strain 168).